The sequence spans 70 residues: Large ribosomal subunit protein bL31 (70 aa).

The Zn(2+) site is built by cysteine 16, cysteine 18, cysteine 37, and cysteine 40.

Belongs to the bacterial ribosomal protein bL31 family. Type A subfamily. Part of the 50S ribosomal subunit. The cofactor is Zn(2+).

Its function is as follows. Binds the 23S rRNA. This Desulfovibrio desulfuricans (strain ATCC 27774 / DSM 6949 / MB) protein is Large ribosomal subunit protein bL31.